We begin with the raw amino-acid sequence, 276 residues long: Tryptase beta-2 (276 aa).

Residues 1 to 21 form the signal peptide; it reads MLKRRLLLLWALSLLASLVYS. The propeptide at 22 to 31 is activation peptide; that stretch reads APRPANQRVG. Residues 32–273 form the Peptidase S1 domain; it reads IVGGHEASES…YLDWIHRYVP (242 aa). Residues C60 and C76 are joined by a disulfide bond. Catalysis depends on H75, which acts as the Charge relay system. Y98 carries the post-translational modification Phosphotyrosine. The Charge relay system role is filled by D122. N133 carries N-linked (GlcNAc...) asparagine glycosylation. Disulfide bonds link C156/C231, C189/C212, and C221/C249. Catalysis depends on S225, which acts as the Charge relay system.

The protein belongs to the peptidase S1 family. Tryptase subfamily. As to quaternary structure, homotetramer. The active tetramer is converted to inactive monomers at neutral and acidic pH in the absence of heparin. Low concentrations of inactive monomers become active monomers at pH 6.0 in the presence of heparin. When the concentration of active monomers is higher, they convert to active monomers and then to active tetramers. These monomers are active and functionally distinct from the tetrameric enzyme. In contrast to the hidden active sites in the tetrameric form, the active site of the monomeric form is accessible for macromolecular proteins and inhibitors, e.g. fibrinogen which is a substrate for the monomeric but not for the tetrameric form. The monomeric form forms a complex with SERPINB6. As to expression, during embryogenesis, detected primarily in skin.

The protein localises to the secreted. The enzyme catalyses Preferential cleavage: Arg-|-Xaa, Lys-|-Xaa, but with more restricted specificity than trypsin.. Tryptase is the major neutral protease present in mast cells and is secreted upon the coupled activation-degranulation response of this cell type. Plays a role in innate immunity. The polypeptide is Tryptase beta-2 (Tpsb2) (Mus musculus (Mouse)).